A 202-amino-acid polypeptide reads, in one-letter code: Putative scarecrow-like protein 16 (202 aa).

The VHIID stretch occupies residues methionine 1–valine 26. The region spanning methionine 1–arginine 202 is the GRAS domain. The leucine repeat II (LRII) stretch occupies residues glutamate 45–arginine 82. The tract at residues leucine 92–asparagine 184 is PFYRE. The segment at alanine 187–arginine 202 is SAW.

It belongs to the GRAS family. Expressed in seedlings, leaves and flowers.

Its subcellular location is the nucleus. Functionally, probable transcription factor involved in plant development. The protein is Putative scarecrow-like protein 16 (SCL16) of Arabidopsis thaliana (Mouse-ear cress).